The sequence spans 886 residues: Protein translocase subunit SecA (886 aa).

ATP is bound by residues Gln85, 103-107, and Asp492; that span reads GEGKT. Positions 841-864 are enriched in basic and acidic residues; it reads RVVENRYAEEGPKQPARRENKVGR. Residues 841-866 form a disordered region; the sequence is RVVENRYAEEGPKQPARRENKVGRND. Residues Cys868, Cys870, Cys879, and Cys880 each contribute to the Zn(2+) site.

The protein belongs to the SecA family. Monomer and homodimer. Part of the essential Sec protein translocation apparatus which comprises SecA, SecYEG and auxiliary proteins SecDF. Other proteins may also be involved. The cofactor is Zn(2+).

The protein localises to the cell membrane. It localises to the cytoplasm. The catalysed reaction is ATP + H2O + cellular proteinSide 1 = ADP + phosphate + cellular proteinSide 2.. Functionally, part of the Sec protein translocase complex. Interacts with the SecYEG preprotein conducting channel. Has a central role in coupling the hydrolysis of ATP to the transfer of proteins into and across the cell membrane, serving as an ATP-driven molecular motor driving the stepwise translocation of polypeptide chains across the membrane. This chain is Protein translocase subunit SecA, found in Pelotomaculum thermopropionicum (strain DSM 13744 / JCM 10971 / SI).